We begin with the raw amino-acid sequence, 251 residues long: MSTIEDLKATVERLAARVHELEASAKSKIAPEVPKSIRMVLIGPPGAGKGTQAPNLVEKYCACHLATGDMLRSQVQQQTPLGVEAKKIMDAGGLVSDDIMVNMIRSELENNSKCKNGFILDGFPRTIPQAEKLDEMLAEKKQPLEKAVELKIPDDLLVARITGRLVHPASGRSYHKVFNPPKKEMIDDITGEALVQRSDDNADALKKRLVSFHKQTEPIVGYYQKTGIWKGVDAAQDPKKVWGDILKCLGQ.

Residue Gly46–Thr51 participates in ATP binding. Residues Ala66–Val95 form an NMP region. Residues Thr67, Arg72, Gly93–Val95, Gly122–Arg125, and Gln129 each bind AMP. Positions Gly163–Asp200 are LID. Residues Arg164 and Ser173–Tyr174 contribute to the ATP site. Residues Arg197 and Arg208 each coordinate AMP. Residue Gln236 participates in ATP binding.

Belongs to the adenylate kinase family. AK2 subfamily. In terms of assembly, monomer.

Its subcellular location is the cytoplasm. It localises to the cytosol. The protein localises to the mitochondrion intermembrane space. The enzyme catalyses AMP + ATP = 2 ADP. Functionally, catalyzes the reversible transfer of the terminal phosphate group between ATP and AMP. Plays an important role in cellular energy homeostasis and in adenine nucleotide metabolism. Adenylate kinase activity is critical for regulation of the phosphate utilization and the AMP de novo biosynthesis pathways. This chain is Adenylate kinase, found in Yarrowia lipolytica (strain CLIB 122 / E 150) (Yeast).